The chain runs to 341 residues: tRNA N6-adenosine threonylcarbamoyltransferase (341 aa).

Fe cation is bound by residues His-112 and His-116. Residues Thr-138–Gly-142, Asp-171, Gly-184, Asp-188, and Asn-279 contribute to the substrate site. A Fe cation-binding site is contributed by Asp-307.

It belongs to the KAE1 / TsaD family. Fe(2+) serves as cofactor.

It localises to the cytoplasm. The enzyme catalyses L-threonylcarbamoyladenylate + adenosine(37) in tRNA = N(6)-L-threonylcarbamoyladenosine(37) in tRNA + AMP + H(+). Its function is as follows. Required for the formation of a threonylcarbamoyl group on adenosine at position 37 (t(6)A37) in tRNAs that read codons beginning with adenine. Is involved in the transfer of the threonylcarbamoyl moiety of threonylcarbamoyl-AMP (TC-AMP) to the N6 group of A37, together with TsaE and TsaB. TsaD likely plays a direct catalytic role in this reaction. The sequence is that of tRNA N6-adenosine threonylcarbamoyltransferase from Riemerella anatipestifer (Moraxella anatipestifer).